The sequence spans 308 residues: Ribosomal RNA small subunit methyltransferase A (308 aa).

The S-adenosyl-L-methionine site is built by Asn-35, Val-37, Gly-62, Glu-83, Asp-113, and Asn-136.

This sequence belongs to the class I-like SAM-binding methyltransferase superfamily. rRNA adenine N(6)-methyltransferase family. RsmA subfamily.

It localises to the cytoplasm. The catalysed reaction is adenosine(1518)/adenosine(1519) in 16S rRNA + 4 S-adenosyl-L-methionine = N(6)-dimethyladenosine(1518)/N(6)-dimethyladenosine(1519) in 16S rRNA + 4 S-adenosyl-L-homocysteine + 4 H(+). Functionally, specifically dimethylates two adjacent adenosines (A1518 and A1519) in the loop of a conserved hairpin near the 3'-end of 16S rRNA in the 30S particle. May play a critical role in biogenesis of 30S subunits. The sequence is that of Ribosomal RNA small subunit methyltransferase A from Bifidobacterium longum (strain NCC 2705).